Here is a 250-residue protein sequence, read N- to C-terminus: UPF0259 membrane protein PC1_1998 (250 aa).

6 helical membrane-spanning segments follow: residues 20-40, 90-110, 132-152, 156-176, 192-212, and 222-242; these read FISILMMSLLTAFITVILNHA, FAALVGNVLLTGGVLMLIQLV, LLFLILLCTLLIQLGMMLLVI, LLAIALSLSPVIVVTEKSGIF, ATAPAIVMWLLAKIAILLVVS, and LGVVLNGLSNLISAILLIYLF.

It belongs to the UPF0259 family.

It is found in the cell inner membrane. This chain is UPF0259 membrane protein PC1_1998, found in Pectobacterium carotovorum subsp. carotovorum (strain PC1).